The following is a 66-amino-acid chain: Ocellatin-PT1 (66 aa).

The first 22 residues, 1-22, serve as a signal peptide directing secretion; the sequence is MAFLKKSLFLVLFLGLVSLSIC. Positions 23 to 39 are excised as a propeptide; it reads DEEKRQDEDDDDDDDEE. Residue valine 66 is modified to Valine amide.

In terms of tissue distribution, expressed by the skin glands.

It is found in the secreted. Its function is as follows. Has antibacterial activity against Gram-negative bacterium E.coli ATCC 25922 (MIC=300 uM) but not against S.pneumoniae ATCC 700603, S.choleraesuis ATCC 14028 or Gram-positive bacterium S.aureus ATCC 29313. Shows virtually no hemolytic activity and no cytotoxicity. The sequence is that of Ocellatin-PT1 from Leptodactylus pustulatus (Ceara white-lipped frog).